A 442-amino-acid polypeptide reads, in one-letter code: 3-phosphoshikimate 1-carboxyvinyltransferase (442 aa).

The span at 1–11 shows a compositional bias: polar residues; the sequence is MQVSRPLTVSA. The tract at residues 1 to 25 is disordered; sequence MQVSRPLTVSASPKGLSGRTRVPGD. Residues Lys-26, Ser-27, and Arg-31 each contribute to the 3-phosphoshikimate site. Lys-26 is a binding site for phosphoenolpyruvate. Residues Gly-98 and Arg-126 each contribute to the phosphoenolpyruvate site. 3-phosphoshikimate is bound by residues Ser-171, Gln-173, Asp-324, and Lys-351. Gln-173 serves as a coordination point for phosphoenolpyruvate. Asp-324 serves as the catalytic Proton acceptor. Arg-355 and Arg-398 together coordinate phosphoenolpyruvate.

This sequence belongs to the EPSP synthase family. Monomer.

It is found in the cytoplasm. The catalysed reaction is 3-phosphoshikimate + phosphoenolpyruvate = 5-O-(1-carboxyvinyl)-3-phosphoshikimate + phosphate. It participates in metabolic intermediate biosynthesis; chorismate biosynthesis; chorismate from D-erythrose 4-phosphate and phosphoenolpyruvate: step 6/7. Catalyzes the transfer of the enolpyruvyl moiety of phosphoenolpyruvate (PEP) to the 5-hydroxyl of shikimate-3-phosphate (S3P) to produce enolpyruvyl shikimate-3-phosphate and inorganic phosphate. This is 3-phosphoshikimate 1-carboxyvinyltransferase from Gluconobacter oxydans (strain 621H) (Gluconobacter suboxydans).